A 511-amino-acid chain; its full sequence is Bifunctional purine biosynthesis protein PurH (511 aa).

An MGS-like domain is found at 1-145; the sequence is MKKRALVSVS…KNHQFVSVIV (145 aa).

It belongs to the PurH family.

The catalysed reaction is (6R)-10-formyltetrahydrofolate + 5-amino-1-(5-phospho-beta-D-ribosyl)imidazole-4-carboxamide = 5-formamido-1-(5-phospho-D-ribosyl)imidazole-4-carboxamide + (6S)-5,6,7,8-tetrahydrofolate. It carries out the reaction IMP + H2O = 5-formamido-1-(5-phospho-D-ribosyl)imidazole-4-carboxamide. The protein operates within purine metabolism; IMP biosynthesis via de novo pathway; 5-formamido-1-(5-phospho-D-ribosyl)imidazole-4-carboxamide from 5-amino-1-(5-phospho-D-ribosyl)imidazole-4-carboxamide (10-formyl THF route): step 1/1. Its pathway is purine metabolism; IMP biosynthesis via de novo pathway; IMP from 5-formamido-1-(5-phospho-D-ribosyl)imidazole-4-carboxamide: step 1/1. The chain is Bifunctional purine biosynthesis protein PurH from Bacillus cereus (strain G9842).